Here is a 308-residue protein sequence, read N- to C-terminus: Urease accessory protein UreD (308 aa).

This sequence belongs to the UreD family. UreD, UreF and UreG form a complex that acts as a GTP-hydrolysis-dependent molecular chaperone, activating the urease apoprotein by helping to assemble the nickel containing metallocenter of UreC. The UreE protein probably delivers the nickel.

The protein resides in the cytoplasm. Its function is as follows. Required for maturation of urease via the functional incorporation of the urease nickel metallocenter. The protein is Urease accessory protein UreD of Psychromonas ingrahamii (strain DSM 17664 / CCUG 51855 / 37).